The following is a 572-amino-acid chain: Laccase-3 (572 aa).

Residues 1–18 (MARTTFLVSVSLFVSAVL) form the signal peptide. Plastocyanin-like domains follow at residues 21-145 (TVEY…LVIY) and 157-304 (IDDE…LIYE). The Cu cation site is built by histidine 82, histidine 84, histidine 127, and histidine 129. A disulfide bridge connects residues cysteine 103 and cysteine 561. 5 N-linked (GlcNAc...) asparagine glycosylation sites follow: asparagine 182, asparagine 228, asparagine 294, asparagine 367, and asparagine 405. The Plastocyanin-like 3 domain maps to 422-540 (DMPTLLKILT…EGFAMVFAEA (119 aa)). The Cu cation site is built by histidine 470, histidine 473, histidine 475, histidine 522, cysteine 523, histidine 524, and histidine 528.

Belongs to the multicopper oxidase family. As to quaternary structure, homodimer. Cu cation serves as cofactor. In terms of tissue distribution, in mycelia, at a lower level than LCC4.

It is found in the secreted. It carries out the reaction 4 hydroquinone + O2 = 4 benzosemiquinone + 2 H2O. Its function is as follows. Lignin degradation and detoxification of lignin-derived products. The sequence is that of Laccase-3 (LCC3) from Thanatephorus cucumeris (Black scurf of potato).